Consider the following 423-residue polypeptide: Gamma-glutamyl phosphate reductase (423 aa).

It belongs to the gamma-glutamyl phosphate reductase family.

Its subcellular location is the cytoplasm. It carries out the reaction L-glutamate 5-semialdehyde + phosphate + NADP(+) = L-glutamyl 5-phosphate + NADPH + H(+). Its pathway is amino-acid biosynthesis; L-proline biosynthesis; L-glutamate 5-semialdehyde from L-glutamate: step 2/2. Its function is as follows. Catalyzes the NADPH-dependent reduction of L-glutamate 5-phosphate into L-glutamate 5-semialdehyde and phosphate. The product spontaneously undergoes cyclization to form 1-pyrroline-5-carboxylate. This chain is Gamma-glutamyl phosphate reductase, found in Pseudomonas fluorescens (strain Pf0-1).